The chain runs to 446 residues: Exodeoxyribonuclease 7 large subunit (446 aa).

It belongs to the XseA family. As to quaternary structure, heterooligomer composed of large and small subunits.

The protein localises to the cytoplasm. It carries out the reaction Exonucleolytic cleavage in either 5'- to 3'- or 3'- to 5'-direction to yield nucleoside 5'-phosphates.. Bidirectionally degrades single-stranded DNA into large acid-insoluble oligonucleotides, which are then degraded further into small acid-soluble oligonucleotides. The polypeptide is Exodeoxyribonuclease 7 large subunit (Shewanella denitrificans (strain OS217 / ATCC BAA-1090 / DSM 15013)).